We begin with the raw amino-acid sequence, 365 residues long: UDP-N-acetylglucosamine--N-acetylmuramyl-(pentapeptide) pyrophosphoryl-undecaprenol N-acetylglucosamine transferase (365 aa).

Residues 19–21, N131, R170, S201, I255, 274–279, and Q300 each bind UDP-N-acetyl-alpha-D-glucosamine; these read TGG and ALTVTE.

It belongs to the glycosyltransferase 28 family. MurG subfamily.

It is found in the cell inner membrane. It catalyses the reaction di-trans,octa-cis-undecaprenyl diphospho-N-acetyl-alpha-D-muramoyl-L-alanyl-D-glutamyl-meso-2,6-diaminopimeloyl-D-alanyl-D-alanine + UDP-N-acetyl-alpha-D-glucosamine = di-trans,octa-cis-undecaprenyl diphospho-[N-acetyl-alpha-D-glucosaminyl-(1-&gt;4)]-N-acetyl-alpha-D-muramoyl-L-alanyl-D-glutamyl-meso-2,6-diaminopimeloyl-D-alanyl-D-alanine + UDP + H(+). It participates in cell wall biogenesis; peptidoglycan biosynthesis. In terms of biological role, cell wall formation. Catalyzes the transfer of a GlcNAc subunit on undecaprenyl-pyrophosphoryl-MurNAc-pentapeptide (lipid intermediate I) to form undecaprenyl-pyrophosphoryl-MurNAc-(pentapeptide)GlcNAc (lipid intermediate II). In Acinetobacter baumannii (strain ATCC 17978 / DSM 105126 / CIP 53.77 / LMG 1025 / NCDC KC755 / 5377), this protein is UDP-N-acetylglucosamine--N-acetylmuramyl-(pentapeptide) pyrophosphoryl-undecaprenol N-acetylglucosamine transferase.